A 466-amino-acid polypeptide reads, in one-letter code: GTPase Der (466 aa).

2 EngA-type G domains span residues Pro3–Pro167 and Pro176–Met350. GTP contacts are provided by residues Gly9–Ser16, Asp56–Phe60, Asn119–Glu122, Gly182–Ser189, Asp229–Leu233, and Asn294–Asp297. One can recognise a KH-like domain in the interval Ala351–Arg435. The tract at residues Thr433–Gly466 is disordered. Positions Arg453–Gly466 are enriched in basic residues.

Belongs to the TRAFAC class TrmE-Era-EngA-EngB-Septin-like GTPase superfamily. EngA (Der) GTPase family. In terms of assembly, associates with the 50S ribosomal subunit.

Its function is as follows. GTPase that plays an essential role in the late steps of ribosome biogenesis. This chain is GTPase Der, found in Nitrosospira multiformis (strain ATCC 25196 / NCIMB 11849 / C 71).